We begin with the raw amino-acid sequence, 373 residues long: Probable dual-specificity RNA methyltransferase RlmN (373 aa).

The Proton acceptor role is filled by glutamate 111. In terms of domain architecture, Radical SAM core spans glycine 117–histidine 356. Residues cysteine 124 and cysteine 359 are joined by a disulfide bond. The [4Fe-4S] cluster site is built by cysteine 131, cysteine 135, and cysteine 138. Residues glycine 183–glutamate 184, serine 216, serine 239–histidine 241, and asparagine 316 each bind S-adenosyl-L-methionine. The S-methylcysteine intermediate role is filled by cysteine 359.

This sequence belongs to the radical SAM superfamily. RlmN family. [4Fe-4S] cluster is required as a cofactor.

Its subcellular location is the cytoplasm. It catalyses the reaction adenosine(2503) in 23S rRNA + 2 reduced [2Fe-2S]-[ferredoxin] + 2 S-adenosyl-L-methionine = 2-methyladenosine(2503) in 23S rRNA + 5'-deoxyadenosine + L-methionine + 2 oxidized [2Fe-2S]-[ferredoxin] + S-adenosyl-L-homocysteine. The enzyme catalyses adenosine(37) in tRNA + 2 reduced [2Fe-2S]-[ferredoxin] + 2 S-adenosyl-L-methionine = 2-methyladenosine(37) in tRNA + 5'-deoxyadenosine + L-methionine + 2 oxidized [2Fe-2S]-[ferredoxin] + S-adenosyl-L-homocysteine. In terms of biological role, specifically methylates position 2 of adenine 2503 in 23S rRNA and position 2 of adenine 37 in tRNAs. The polypeptide is Probable dual-specificity RNA methyltransferase RlmN (Chlorobium phaeovibrioides (strain DSM 265 / 1930) (Prosthecochloris vibrioformis (strain DSM 265))).